The following is a 723-amino-acid chain: BBSome complex assembly protein BBS10 (723 aa).

This sequence belongs to the TCP-1 chaperonin family. In terms of assembly, component of a complex composed at least of MKKS, BBS10, BBS12, TCP1, CCT2, CCT3, CCT4, CCT5 and CCT8.

Its subcellular location is the cell projection. The protein resides in the cilium. Probable molecular chaperone that assists the folding of proteins upon ATP hydrolysis. Plays a role in the assembly of BBSome, a complex involved in ciliogenesis regulating transports vesicles to the cilia. Involved in adipogenic differentiation. In Homo sapiens (Human), this protein is BBSome complex assembly protein BBS10 (BBS10).